Here is a 361-residue protein sequence, read N- to C-terminus: Myricetin 3-O-methyltransferase 3 (361 aa).

Residue aspartate 229 coordinates S-adenosyl-L-methionine. The Proton acceptor role is filled by histidine 267.

This sequence belongs to the class I-like SAM-binding methyltransferase superfamily. Cation-independent O-methyltransferase family. As to quaternary structure, homodimer. Mainly expressed in leaves secreting glandular trichomes types 1 and 4 and, to a lesser extent, in storage trichomes type 6.

The enzyme catalyses kaempferol + S-adenosyl-L-methionine = 3-O-methylkaempferol + S-adenosyl-L-homocysteine + H(+). It carries out the reaction quercetin + S-adenosyl-L-methionine = 3',4',5,7-tetrahydroxy-3-methoxyflavone + S-adenosyl-L-homocysteine + H(+). It catalyses the reaction myricetin + S-adenosyl-L-methionine = 3-O-methylmyricetin + S-adenosyl-L-homocysteine + H(+). The catalysed reaction is kaempferide + S-adenosyl-L-methionine = 3,4'-O-dimethylkaempferol + S-adenosyl-L-homocysteine + H(+). The enzyme catalyses isorhamnetin + S-adenosyl-L-methionine = 3,3'-O-dimethylquercetin + S-adenosyl-L-homocysteine + H(+). It carries out the reaction rhamnetin + S-adenosyl-L-methionine = 3',4',5-trihydroxy-3,7-dimethoxyflavone + S-adenosyl-L-homocysteine + H(+). It catalyses the reaction laricitrin + S-adenosyl-L-methionine = 3,3'-O-dimethylmyricetin + S-adenosyl-L-homocysteine + H(+). The catalysed reaction is syringetin + S-adenosyl-L-methionine = 3,3',5'-O-trimethylmyricetin + S-adenosyl-L-homocysteine + H(+). It participates in flavonoid metabolism. Flavonoid 3-O-methyltransferase involved in the biosynthesis of polymethoxylated flavonoids natural products such as myricetin derivatives, aroma compounds possessing antioxidant properties and exhibiting pharmacological activities such as anti-carcinogen, anti-viral, anti-thrombotic, anti-diabetic, anti-atherosclerotic, and anti-inflammatory effects. Catalyzes S-adenosylmethionine-dependent regioselective 3-O-methylation of flavonoids; active on various hydroxylated flavonoid substrates. Active with myricetin, quercetin, kaempferol, 4'-methyl kaempferol (kaempferide), 3'-methyl quercetin (isorhamnetin), 7-methyl quercetin (rhamnetin), 3'-methyl myricetin (laricitrin) and 3',5'-dimethyl myricetin (syringetin), thus producing 3-methyl myricetin, 3-methyl quercetin, 3-methyl kaempferol, 4',3-methyl kaempferol, 3',3-methyl quercetin, 7,3-dimethyl quercetin, 3',3-dimethyl myricetin and 3',5',3-dimethyl myricetin, respectively. Inactive with flavonol substrates methylated at the 3-hydroxyl position such as 3-O-methyl quercetin. The polypeptide is Myricetin 3-O-methyltransferase 3 (Solanum habrochaites (Wild tomato)).